Here is a 60-residue protein sequence, read N- to C-terminus: Short neurotoxin C (60 aa).

Cystine bridges form between cysteine 3-cysteine 22, cysteine 17-cysteine 39, cysteine 41-cysteine 52, and cysteine 53-cysteine 58.

Belongs to the three-finger toxin family. Short-chain subfamily. Type I alpha-neurotoxin sub-subfamily. As to expression, expressed by the venom gland.

Its subcellular location is the secreted. Its function is as follows. Binds to muscle nicotinic acetylcholine receptor (nAChR) and inhibit acetylcholine from binding to the receptor, thereby impairing neuromuscular transmission. The polypeptide is Short neurotoxin C (Aipysurus laevis (Olive sea snake)).